Reading from the N-terminus, the 188-residue chain is 3-hydroxyanthranilate 3,4-dioxygenase 2 (188 aa).

Residue arginine 46 participates in O2 binding. Fe cation is bound by residues histidine 50, glutamate 70, and histidine 108. Position 70 (glutamate 70) interacts with substrate. Substrate contacts are provided by arginine 112 and glutamate 122.

Belongs to the 3-HAO family. It depends on Fe(2+) as a cofactor.

The protein localises to the cytoplasm. It carries out the reaction 3-hydroxyanthranilate + O2 = (2Z,4Z)-2-amino-3-carboxymuconate 6-semialdehyde. Its pathway is cofactor biosynthesis; NAD(+) biosynthesis; quinolinate from L-kynurenine: step 3/3. Its function is as follows. Catalyzes the oxidative ring opening of 3-hydroxyanthranilate to 2-amino-3-carboxymuconate semialdehyde, which spontaneously cyclizes to quinolinate. The sequence is that of 3-hydroxyanthranilate 3,4-dioxygenase 2 (bna1-2) from Aspergillus fumigatus (strain CBS 144.89 / FGSC A1163 / CEA10) (Neosartorya fumigata).